The following is a 215-amino-acid chain: Ribonuclease HII (215 aa).

Positions 19-214 (KNVIGVDEAG…KILETEEEKT (196 aa)) constitute an RNase H type-2 domain. A divalent metal cation contacts are provided by aspartate 25, glutamate 26, and aspartate 121.

It belongs to the RNase HII family. The cofactor is Mn(2+). Mg(2+) serves as cofactor.

Its subcellular location is the cytoplasm. The catalysed reaction is Endonucleolytic cleavage to 5'-phosphomonoester.. Functionally, endonuclease that specifically degrades the RNA of RNA-DNA hybrids. The chain is Ribonuclease HII from Fusobacterium nucleatum subsp. nucleatum (strain ATCC 25586 / DSM 15643 / BCRC 10681 / CIP 101130 / JCM 8532 / KCTC 2640 / LMG 13131 / VPI 4355).